The chain runs to 531 residues: Bifunctional protein TrpGD (531 aa).

In terms of domain architecture, Glutamine amidotransferase type-1 spans 3–196; that stretch reads DILLLDNIDS…LAWAQQKLEP (194 aa). L-glutamine is bound at residue 57–59; it reads GPG. C84 (nucleophile; for GATase activity) is an active-site residue. L-glutamine-binding positions include Q88 and 134–135; that span reads SL. Active-site for GATase activity residues include H170 and E172. The anthranilate phosphoribosyltransferase stretch occupies residues 202-531; sequence PILEKLYQAQ…DRVTALAARG (330 aa).

In the C-terminal section; belongs to the anthranilate phosphoribosyltransferase family. In terms of assembly, monomer. Heterotetramer consisting of two non-identical subunits: a beta subunit (TrpG) and a large alpha subunit (TrpE).

The enzyme catalyses chorismate + L-glutamine = anthranilate + pyruvate + L-glutamate + H(+). The catalysed reaction is N-(5-phospho-beta-D-ribosyl)anthranilate + diphosphate = 5-phospho-alpha-D-ribose 1-diphosphate + anthranilate. It participates in amino-acid biosynthesis; L-tryptophan biosynthesis; L-tryptophan from chorismate: step 1/5. Its pathway is amino-acid biosynthesis; L-tryptophan biosynthesis; L-tryptophan from chorismate: step 2/5. Cooperatively feedback inhibited by tryptophan. In terms of biological role, part of a heterotetrameric complex that catalyzes the two-step biosynthesis of anthranilate, an intermediate in the biosynthesis of L-tryptophan. In the first step, the glutamine-binding beta subunit (TrpG) of anthranilate synthase (AS) provides the glutamine amidotransferase activity which generates ammonia as a substrate that, along with chorismate, is used in the second step, catalyzed by the large alpha subunit of AS (TrpE) to produce anthranilate. In the absence of TrpG, TrpE can synthesize anthranilate directly from chorismate and high concentrations of ammonia. In addition to synthesizing anthranilate, it also catalyzes the second step of the pathway, the transfer of the phosphoribosyl group of 5-phosphorylribose-1-pyrophosphate (PRPP) to anthranilate. This Salmonella typhimurium (strain LT2 / SGSC1412 / ATCC 700720) protein is Bifunctional protein TrpGD (trpGD).